The sequence spans 318 residues: Olfactory receptor 5G25 (318 aa).

Topologically, residues 1-25 are extracellular; that stretch reads MMHRNQTVVTEFFFTGLTSSFHLQI. The N-linked (GlcNAc...) asparagine glycan is linked to N5. The helical transmembrane segment at 26 to 46 threads the bilayer; that stretch reads VLFLTFLCVYLATLLGNLGMI. Residues 47 to 54 are Cytoplasmic-facing; that stretch reads ILIHQDTR. Residues 55 to 75 form a helical membrane-spanning segment; sequence LHIPMYFFLSHLSFVDACSSS. Residues 76–99 lie on the Extracellular side of the membrane; it reads VISPKMLSDIFVDKKVISFLGCAI. Residues C97 and C189 are joined by a disulfide bond. A helical transmembrane segment spans residues 100 to 120; sequence QFCLFSQFVVTECFLLASMAY. Over 121 to 133 the chain is Cytoplasmic; the sequence is DRYVAICKPLLYT. Residues 134–154 traverse the membrane as a helical segment; sequence LIMSQRVCVQLVIGPYSIGLI. Topologically, residues 155 to 196 are extracellular; the sequence is STVVHTTSAFILPYCGPNLINHFFCDLLPVLSLACADTQMNK. The chain crosses the membrane as a helical span at residues 197 to 217; that stretch reads HLLFIMAGILGVFSGIIILVS. The Cytoplasmic portion of the chain corresponds to 218-237; that stretch reads YVYIAITILKINSADGRRKA. A helical membrane pass occupies residues 238 to 258; it reads FSTCSSHLTAVSILYGTLFFI. The Extracellular portion of the chain corresponds to 259–271; sequence YVRPSSSFSLDIN. The chain crosses the membrane as a helical span at residues 272–292; that stretch reads KVVSLFYTAVIPMLNPFIYSL. Over 293–318 the chain is Cytoplasmic; the sequence is RNKEVKDALIRTFEKKFCYSLQDKIL.

Belongs to the G-protein coupled receptor 1 family.

It is found in the cell membrane. In terms of biological role, potential odorant receptor. The protein is Olfactory receptor 5G25 of Mus musculus (Mouse).